A 656-amino-acid polypeptide reads, in one-letter code: DNA ligase (656 aa).

Residues 32–36 (DEEYD), 81–82 (SM), and E112 contribute to the NAD(+) site. The N6-AMP-lysine intermediate role is filled by K114. R135, E169, K284, and K308 together coordinate NAD(+). Zn(2+) is bound by residues C402, C405, C418, and C423. Residues 577 to 656 (VQKTPFTGKT…DMWKMLKEGK (80 aa)) form the BRCT domain.

Belongs to the NAD-dependent DNA ligase family. LigA subfamily. Mg(2+) is required as a cofactor. The cofactor is Mn(2+).

The enzyme catalyses NAD(+) + (deoxyribonucleotide)n-3'-hydroxyl + 5'-phospho-(deoxyribonucleotide)m = (deoxyribonucleotide)n+m + AMP + beta-nicotinamide D-nucleotide.. Its function is as follows. DNA ligase that catalyzes the formation of phosphodiester linkages between 5'-phosphoryl and 3'-hydroxyl groups in double-stranded DNA using NAD as a coenzyme and as the energy source for the reaction. It is essential for DNA replication and repair of damaged DNA. This chain is DNA ligase, found in Nautilia profundicola (strain ATCC BAA-1463 / DSM 18972 / AmH).